The primary structure comprises 97 residues: Aspartyl/glutamyl-tRNA(Asn/Gln) amidotransferase subunit C (97 aa).

This sequence belongs to the GatC family. In terms of assembly, heterotrimer of A, B and C subunits.

The enzyme catalyses L-glutamyl-tRNA(Gln) + L-glutamine + ATP + H2O = L-glutaminyl-tRNA(Gln) + L-glutamate + ADP + phosphate + H(+). It carries out the reaction L-aspartyl-tRNA(Asn) + L-glutamine + ATP + H2O = L-asparaginyl-tRNA(Asn) + L-glutamate + ADP + phosphate + 2 H(+). Functionally, allows the formation of correctly charged Asn-tRNA(Asn) or Gln-tRNA(Gln) through the transamidation of misacylated Asp-tRNA(Asn) or Glu-tRNA(Gln) in organisms which lack either or both of asparaginyl-tRNA or glutaminyl-tRNA synthetases. The reaction takes place in the presence of glutamine and ATP through an activated phospho-Asp-tRNA(Asn) or phospho-Glu-tRNA(Gln). This chain is Aspartyl/glutamyl-tRNA(Asn/Gln) amidotransferase subunit C, found in Roseiflexus sp. (strain RS-1).